Consider the following 494-residue polypeptide: Aspartyl/glutamyl-tRNA(Asn/Gln) amidotransferase subunit B (494 aa).

It belongs to the GatB/GatE family. GatB subfamily. As to quaternary structure, heterotrimer of A, B and C subunits.

It carries out the reaction L-glutamyl-tRNA(Gln) + L-glutamine + ATP + H2O = L-glutaminyl-tRNA(Gln) + L-glutamate + ADP + phosphate + H(+). The catalysed reaction is L-aspartyl-tRNA(Asn) + L-glutamine + ATP + H2O = L-asparaginyl-tRNA(Asn) + L-glutamate + ADP + phosphate + 2 H(+). Its function is as follows. Allows the formation of correctly charged Asn-tRNA(Asn) or Gln-tRNA(Gln) through the transamidation of misacylated Asp-tRNA(Asn) or Glu-tRNA(Gln) in organisms which lack either or both of asparaginyl-tRNA or glutaminyl-tRNA synthetases. The reaction takes place in the presence of glutamine and ATP through an activated phospho-Asp-tRNA(Asn) or phospho-Glu-tRNA(Gln). The chain is Aspartyl/glutamyl-tRNA(Asn/Gln) amidotransferase subunit B from Synechococcus sp. (strain WH7803).